The following is a 292-amino-acid chain: Universal stress protein Mb2346c (292 aa).

It belongs to the universal stress protein A family.

The sequence is that of Universal stress protein Mb2346c from Mycobacterium bovis (strain ATCC BAA-935 / AF2122/97).